Consider the following 1091-residue polypeptide: Leucine--tRNA ligase, cytoplasmic (1091 aa).

A 'HIGH' region motif is present at residues 53 to 63; sequence PYMNGYLHIGH. Positions 715–719 match the 'KMSKS' region motif; that stretch reads KMSKS. Lys-718 lines the ATP pocket.

Belongs to the class-I aminoacyl-tRNA synthetase family.

It localises to the cytoplasm. The protein localises to the cytosol. It carries out the reaction tRNA(Leu) + L-leucine + ATP = L-leucyl-tRNA(Leu) + AMP + diphosphate. Functionally, catalyzes the specific attachment of an amino acid to its cognate tRNA in a two step reaction: the amino acid (AA) is first activated by ATP to form AA-AMP and then transferred to the acceptor end of the tRNA. In Arabidopsis thaliana (Mouse-ear cress), this protein is Leucine--tRNA ligase, cytoplasmic.